An 88-amino-acid chain; its full sequence is Alpha-latrotoxin-associated low molecular weight protein-2 (88 aa).

A signal peptide spans 1–19 (MLKLICIAFLVTVLTLVAG). The residue at position 20 (Gln-20) is a Pyrrolidone carboxylic acid. Disulfide bonds link Cys-30-Cys-66, Cys-46-Cys-62, and Cys-49-Cys-75.

It belongs to the arthropod CHH/MIH/GIH/VIH hormone family. The N-terminus is blocked. Expressed by the venom gland.

It localises to the secreted. May increase the toxicity of alpha-latrotoxin and/or other venom components. Is non-toxic to mice and to the cockroach Periplaneta americana. The chain is Alpha-latrotoxin-associated low molecular weight protein-2 from Latrodectus tredecimguttatus (Mediterranean black widow spider).